Reading from the N-terminus, the 285-residue chain is tRNA (guanine-N(7)-)-methyltransferase (285 aa).

S-adenosyl-L-methionine contacts are provided by residues glycine 102, 125–126 (EI), 160–161 (NA), and cysteine 180. Aspartate 183 is an active-site residue. Residue 258–260 (TEE) participates in S-adenosyl-L-methionine binding.

Belongs to the class I-like SAM-binding methyltransferase superfamily. TrmB family. Forms a complex with TRM82.

It is found in the nucleus. The enzyme catalyses guanosine(46) in tRNA + S-adenosyl-L-methionine = N(7)-methylguanosine(46) in tRNA + S-adenosyl-L-homocysteine. It participates in tRNA modification; N(7)-methylguanine-tRNA biosynthesis. Functionally, catalyzes the formation of N(7)-methylguanine at position 46 (m7G46) in tRNA. The chain is tRNA (guanine-N(7)-)-methyltransferase from Candida glabrata (strain ATCC 2001 / BCRC 20586 / JCM 3761 / NBRC 0622 / NRRL Y-65 / CBS 138) (Yeast).